The primary structure comprises 334 residues: HTH-type transcriptional repressor PurR (334 aa).

Residues 2 to 56 enclose the HTH lacI-type domain; the sequence is ATIKDVARLAGVSTTTVSHVINKTRFVAETTQEKVMKAVDELNYAPSAVARSLKC. Residues 4 to 23 constitute a DNA-binding region (H-T-H motif); the sequence is IKDVARLAGVSTTTVSHVIN. The DNA-binding element occupies 48-56; the sequence is SAVARSLKC. 4 residues coordinate hypoxanthine: phenylalanine 73, lysine 189, phenylalanine 220, and aspartate 274.

In terms of assembly, homodimer.

The protein operates within purine metabolism; purine nucleotide biosynthesis [regulation]. Functionally, is the main repressor of the genes involved in the de novo synthesis of purine nucleotides, regulating purB, purC, purEK, purF, purHD, purL, purMN and guaBA expression. PurR is allosterically activated to bind its cognate DNA by binding the purine corepressors, hypoxanthine or guanine, thereby effecting transcription repression. This chain is HTH-type transcriptional repressor PurR, found in Vibrio campbellii (strain ATCC BAA-1116).